The chain runs to 179 residues: ATP synthase subunit delta (179 aa).

Belongs to the ATPase delta chain family. In terms of assembly, F-type ATPases have 2 components, F(1) - the catalytic core - and F(0) - the membrane proton channel. F(1) has five subunits: alpha(3), beta(3), gamma(1), delta(1), epsilon(1). F(0) has three main subunits: a(1), b(2) and c(10-14). The alpha and beta chains form an alternating ring which encloses part of the gamma chain. F(1) is attached to F(0) by a central stalk formed by the gamma and epsilon chains, while a peripheral stalk is formed by the delta and b chains.

It is found in the cell membrane. F(1)F(0) ATP synthase produces ATP from ADP in the presence of a proton or sodium gradient. F-type ATPases consist of two structural domains, F(1) containing the extramembraneous catalytic core and F(0) containing the membrane proton channel, linked together by a central stalk and a peripheral stalk. During catalysis, ATP synthesis in the catalytic domain of F(1) is coupled via a rotary mechanism of the central stalk subunits to proton translocation. In terms of biological role, this protein is part of the stalk that links CF(0) to CF(1). It either transmits conformational changes from CF(0) to CF(1) or is implicated in proton conduction. The sequence is that of ATP synthase subunit delta from Listeria innocua serovar 6a (strain ATCC BAA-680 / CLIP 11262).